Reading from the N-terminus, the 183-residue chain is Peptide deformylase (183 aa).

Fe cation contacts are provided by Cys110 and His153. Glu154 is an active-site residue. Fe cation is bound at residue His157.

The protein belongs to the polypeptide deformylase family. Requires Fe(2+) as cofactor.

It catalyses the reaction N-terminal N-formyl-L-methionyl-[peptide] + H2O = N-terminal L-methionyl-[peptide] + formate. Functionally, removes the formyl group from the N-terminal Met of newly synthesized proteins. Requires at least a dipeptide for an efficient rate of reaction. N-terminal L-methionine is a prerequisite for activity but the enzyme has broad specificity at other positions. The protein is Peptide deformylase of Listeria monocytogenes serovar 1/2a (strain ATCC BAA-679 / EGD-e).